Consider the following 337-residue polypeptide: DNA-directed RNA polymerase subunit alpha (337 aa).

Residues 1–226 (MLIAQRPTLT…ELFGLARELN (226 aa)) form an alpha N-terminal domain (alpha-NTD) region. Residues 243-337 (LAADLALEIE…DTSFAEDEQL (95 aa)) are alpha C-terminal domain (alpha-CTD). A disordered region spans residues 315 to 337 (FDPSAVVNDFEDDDTSFAEDEQL). Residues 323–337 (DFEDDDTSFAEDEQL) are compositionally biased toward acidic residues.

Belongs to the RNA polymerase alpha chain family. Homodimer. The RNAP catalytic core consists of 2 alpha, 1 beta, 1 beta' and 1 omega subunit. When a sigma factor is associated with the core the holoenzyme is formed, which can initiate transcription.

The enzyme catalyses RNA(n) + a ribonucleoside 5'-triphosphate = RNA(n+1) + diphosphate. Functionally, DNA-dependent RNA polymerase catalyzes the transcription of DNA into RNA using the four ribonucleoside triphosphates as substrates. The chain is DNA-directed RNA polymerase subunit alpha from Kineococcus radiotolerans (strain ATCC BAA-149 / DSM 14245 / SRS30216).